The following is a 271-amino-acid chain: Keratin-associated protein 10-5 (271 aa).

Tandem repeats lie at residues 26 to 30, 51 to 55, 73 to 77, 78 to 82, 88 to 92, 93 to 97, 98 to 102, 110 to 114, 120 to 124, 130 to 134, 135 to 139, 140 to 144, 152 to 156, 162 to 166, 177 to 181, 187 to 191, 199 to 203, 209 to 213, 214 to 218, 233 to 237, 240 to 244, and 251 to 255. The segment at 26–255 is 22 X 5 AA repeats of C-C-X(3); it reads CCEPPCGTAP…SYQASCCRPA (230 aa).

This sequence belongs to the KRTAP type 10 family. In terms of assembly, interacts with hair keratins. Restricted to a narrow region of the hair fiber cuticle, lying approximately 20 cell layers above the apex of the dermal papilla of the hair root; not detected in any other tissues.

In the hair cortex, hair keratin intermediate filaments are embedded in an interfilamentous matrix, consisting of hair keratin-associated proteins (KRTAP), which are essential for the formation of a rigid and resistant hair shaft through their extensive disulfide bond cross-linking with abundant cysteine residues of hair keratins. The matrix proteins include the high-sulfur and high-glycine-tyrosine keratins. The protein is Keratin-associated protein 10-5 (KRTAP10-5) of Homo sapiens (Human).